The primary structure comprises 443 residues: F-box only protein 39 (443 aa).

One can recognise an F-box domain in the interval 13-59 (QSCWATLPDVCLRRVFWWLGDRDRSRAALVCRKWNQIMYSADLWRYR).

In terms of assembly, directly interacts with SKP1 and CUL1.

Substrate-recognition component of the SCF (SKP1-CUL1-F-box protein)-type E3 ubiquitin ligase complex. In Rattus norvegicus (Rat), this protein is F-box only protein 39 (Fbxo39).